The chain runs to 195 residues: HTH-type transcriptional regulator BetI (195 aa).

An HTH tetR-type domain is found at 8–68; it reads PIRRRQLIDA…ATMRDITSQL (61 aa). A DNA-binding region (H-T-H motif) is located at residues 31-50; that stretch reads TIAQIARRAGVSTGIISHYF.

It participates in amine and polyamine biosynthesis; betaine biosynthesis via choline pathway [regulation]. Functionally, repressor involved in the biosynthesis of the osmoprotectant glycine betaine. It represses transcription of the choline transporter BetT and the genes of BetAB involved in the synthesis of glycine betaine. The sequence is that of HTH-type transcriptional regulator BetI from Klebsiella pneumoniae (strain 342).